The primary structure comprises 468 residues: Shaggy-related protein kinase theta (468 aa).

2 disordered regions span residues 1–53 and 91–112; these read MNVM…DQST and HANR…CGTE. In terms of domain architecture, Protein kinase spans 134 to 418; it reads YMAQRVVGTG…ALEACAHPFF (285 aa). ATP contacts are provided by residues 140 to 148 and Lys-163; that span reads VGTGSFGVV. Catalysis depends on Asp-259, which acts as the Proton acceptor. Tyr-294 carries the phosphotyrosine modification.

The protein belongs to the protein kinase superfamily. CMGC Ser/Thr protein kinase family. GSK-3 subfamily. Autophosphorylated mainly on threonine and serine residues. In developing pollen.

The enzyme catalyses L-seryl-[protein] + ATP = O-phospho-L-seryl-[protein] + ADP + H(+). It catalyses the reaction L-threonyl-[protein] + ATP = O-phospho-L-threonyl-[protein] + ADP + H(+). May mediate extracellular signals to regulate transcription in differentiating cells. The chain is Shaggy-related protein kinase theta from Brassica napus (Rape).